The primary structure comprises 69 residues: Large ribosomal subunit protein bL31 (69 aa).

Residues Cys16, Cys18, Cys38, and Cys41 each coordinate Zn(2+).

Belongs to the bacterial ribosomal protein bL31 family. Type A subfamily. In terms of assembly, part of the 50S ribosomal subunit. It depends on Zn(2+) as a cofactor.

Its function is as follows. Binds the 23S rRNA. The polypeptide is Large ribosomal subunit protein bL31 (Cutibacterium acnes (strain DSM 16379 / KPA171202) (Propionibacterium acnes)).